Consider the following 453-residue polypeptide: Elongation factor 1-alpha (453 aa).

Positions 5-230 constitute a tr-type G domain; that stretch reads KTHINIVVIG…DAIVEPKRPH (226 aa). The G1 stretch occupies residues 14–21; sequence GHVDAGKS. Position 14 to 21 (14 to 21) interacts with GTP; the sequence is GHVDAGKS. Positions 70–74 are G2; sequence GITID. The interval 91–94 is G3; that stretch reads DAPG. GTP contacts are provided by residues 91–95 and 153–156; these read DAPGH and NKMD. The tract at residues 153–156 is G4; that stretch reads NKMD. The segment at 194 to 196 is G5; it reads SGW.

This sequence belongs to the TRAFAC class translation factor GTPase superfamily. Classic translation factor GTPase family. EF-Tu/EF-1A subfamily. As to quaternary structure, binds to actin.

Its subcellular location is the cytoplasm. This protein promotes the GTP-dependent binding of aminoacyl-tRNA to the A-site of ribosomes during protein biosynthesis. It is also an abundant actin filament bundling protein. In Dictyostelium discoideum (Social amoeba), this protein is Elongation factor 1-alpha (eef1a2).